A 246-amino-acid polypeptide reads, in one-letter code: Small ribosomal subunit protein uS2 (246 aa).

Belongs to the universal ribosomal protein uS2 family.

This is Small ribosomal subunit protein uS2 from Burkholderia cenocepacia (strain HI2424).